Here is a 262-residue protein sequence, read N- to C-terminus: 4-hydroxy-2-oxo-heptane-1,7-dioate aldolase (262 aa).

H45 functions as the Proton acceptor in the catalytic mechanism. Q147 lines the substrate pocket. E149 serves as a coordination point for a divalent metal cation. A174 and D175 together coordinate substrate. D175 is an a divalent metal cation binding site.

This sequence belongs to the HpcH/HpaI aldolase family. In terms of assembly, homohexamer; trimer of dimers. A divalent metal cation is required as a cofactor.

The enzyme catalyses 4-hydroxy-2-oxoheptanedioate = succinate semialdehyde + pyruvate. It functions in the pathway aromatic compound metabolism; 4-hydroxyphenylacetate degradation; pyruvate and succinate semialdehyde from 4-hydroxyphenylacetate: step 7/7. Functionally, catalyzes the reversible retro-aldol cleavage of 4-hydroxy-2-ketoheptane-1,7-dioate (HKHD) to pyruvate and succinic semialdehyde. This is 4-hydroxy-2-oxo-heptane-1,7-dioate aldolase from Shigella sonnei (strain Ss046).